Here is a 332-residue protein sequence, read N- to C-terminus: Glycerol-3-phosphate dehydrogenase [NAD(P)+] (332 aa).

5 residues coordinate NADPH: Ser-11, Trp-12, Arg-32, Arg-33, and Lys-106. Lys-106 and Gly-136 together coordinate sn-glycerol 3-phosphate. Residue Ala-140 coordinates NADPH. Lys-191, Asp-244, Ser-254, Arg-255, and Asn-256 together coordinate sn-glycerol 3-phosphate. The active-site Proton acceptor is the Lys-191. Arg-255 is a binding site for NADPH. 2 residues coordinate NADPH: Val-280 and Glu-282.

This sequence belongs to the NAD-dependent glycerol-3-phosphate dehydrogenase family.

It is found in the cytoplasm. The enzyme catalyses sn-glycerol 3-phosphate + NAD(+) = dihydroxyacetone phosphate + NADH + H(+). The catalysed reaction is sn-glycerol 3-phosphate + NADP(+) = dihydroxyacetone phosphate + NADPH + H(+). The protein operates within membrane lipid metabolism; glycerophospholipid metabolism. Its function is as follows. Catalyzes the reduction of the glycolytic intermediate dihydroxyacetone phosphate (DHAP) to sn-glycerol 3-phosphate (G3P), the key precursor for phospholipid synthesis. In Corynebacterium urealyticum (strain ATCC 43042 / DSM 7109), this protein is Glycerol-3-phosphate dehydrogenase [NAD(P)+].